We begin with the raw amino-acid sequence, 658 residues long: Non-reducing end beta-L-arabinofuranosidase (658 aa).

Residues His142, 192–194 (DGH), His270, and Glu322 each bind beta-L-arabinofuranose. Glu322 serves as the catalytic Proton donor/acceptor. Positions 338, 340, 417, and 418 each coordinate Zn(2+). Catalysis depends on Cys417, which acts as the Nucleophile; S-glycosyl-cysteine intermediate.

The protein belongs to the glycosyl hydrolase 127 family. As to quaternary structure, homodimer in solution. Zn(2+) is required as a cofactor.

It carries out the reaction beta-L-arabinofuranosyl-(1-&gt;2)-beta-L-arabinofuranose + H2O = 2 beta-L-arabinofuranose. Its activity is regulated as follows. Strongly inhibited in the presence of thiol modifiers, suggesting a crucial role for cysteine residues in catalysis. Slightly inhibited by EDTA. Its function is as follows. Beta-L-arabinofuranosidase that removes the beta-L-arabinofuranose residue from the non-reducing end of various substrates, including beta-L-arabinofuranosyl-hydroxyproline (Ara-Hyp), Ara-beta-1,2-Ara-beta-Hyp (Ara(2)-Hyp), Ara-beta-1,2-Ara-beta-1,2-Ara-beta-Hyp (Ara(3)-Hyp), and beta-L-arabinofuranosyl-(1-&gt;2)-1-O-methyl-beta-L-arabinofuranose. In the presence of 1-alkanols, shows transglycosylation activity, retaining the anomeric configuration of the arabinofuranose residue. This Bifidobacterium longum subsp. longum (strain ATCC 15707 / DSM 20219 / JCM 1217 / NCTC 11818 / E194b) protein is Non-reducing end beta-L-arabinofuranosidase.